A 260-amino-acid chain; its full sequence is Large ribosomal subunit protein uL30 (260 aa).

Met-1 is modified (N-acetylmethionine). Tandem repeats lie at residues 7 to 18, 19 to 30, 31 to 42, 43 to 54, and 55 to 66. Residues 7-66 form a 5 X 12 AA tandem repeats region; the sequence is KKKKVAAALGTLKKKKVPAVPETLKKKRRNFAELKVKRLRKKFALKTLRKARRKLIYEKA. A Phosphothreonine modification is found at Thr-29. At Lys-136 the chain carries N6-acetyllysine. An N6-succinyllysine modification is found at Lys-139. Residue Tyr-151 is modified to Phosphotyrosine.

Belongs to the universal ribosomal protein uL30 family. In terms of assembly, component of the large ribosomal subunit. Homodimer. Interacts with DHX33.

The protein resides in the cytoplasm. Functionally, component of the large ribosomal subunit. The ribosome is a large ribonucleoprotein complex responsible for the synthesis of proteins in the cell. Binds to G-rich structures in 28S rRNA and in mRNAs. Plays a regulatory role in the translation apparatus; inhibits cell-free translation of mRNAs. This Rattus norvegicus (Rat) protein is Large ribosomal subunit protein uL30 (Rpl7).